The primary structure comprises 866 residues: Replication factor C small subunit (866 aa).

Positions 183–313 constitute a DOD-type homing endonuclease domain; that stretch reads WLGYFIGDGH…VTYALAGFGI (131 aa).

The protein belongs to the activator 1 small subunits family. RfcS subfamily. Heteromultimer composed of small subunits (RfcS) and large subunits (RfcL). This protein undergoes a protein self splicing that involves a post-translational excision of the intervening region (intein) followed by peptide ligation.

Functionally, part of the RFC clamp loader complex which loads the PCNA sliding clamp onto DNA. The polypeptide is Replication factor C small subunit (rfcS) (Thermococcus kodakarensis (strain ATCC BAA-918 / JCM 12380 / KOD1) (Pyrococcus kodakaraensis (strain KOD1))).